The primary structure comprises 297 residues: ClpXP adapter protein SpxH (297 aa).

The protein belongs to the SpxH family. As to quaternary structure, interacts with Spx.

The protein localises to the cytoplasm. Its function is as follows. Adapter protein required for efficient degradation of Spx by ClpXP under non-stress conditions. Interaction with Spx stabilizes Spx and exposes the C-terminus of Spx for recognition and proteolysis by ClpXP. This is ClpXP adapter protein SpxH from Bacillus cereus (strain ATCC 10987 / NRS 248).